The following is a 398-amino-acid chain: ATP-dependent RNA helicase FAL1 (398 aa).

The short motif at 23–51 is the Q motif element; the sequence is ATFESMNLKPDLLRGIYFYGFEYPSSIQS. Positions 54–226 constitute a Helicase ATP-binding domain; the sequence is ISQIISGKDV…KKFMSDPVKI (173 aa). 67-74 lines the ATP pocket; the sequence is AQSGTGKT. The short motif at 172 to 175 is the DEAD box element; that stretch reads DEAD. One can recognise a Helicase C-terminal domain in the interval 237–398; it reads VIKQYYVDVE…PTPANLEELS (162 aa).

The protein belongs to the DEAD box helicase family. DDX48/FAL1 subfamily.

It localises to the nucleus. The protein localises to the nucleolus. It carries out the reaction ATP + H2O = ADP + phosphate + H(+). Its function is as follows. ATP-dependent RNA helicase involved in 40S ribosomal subunit biogenesis. Required for the processing and cleavage of 35S pre-rRNA at sites A0, A1, and A2, leading to mature 18S rRNA. This Kluyveromyces lactis (strain ATCC 8585 / CBS 2359 / DSM 70799 / NBRC 1267 / NRRL Y-1140 / WM37) (Yeast) protein is ATP-dependent RNA helicase FAL1 (FAL1).